A 189-amino-acid polypeptide reads, in one-letter code: Thioredoxin-like protein CITRX, chloroplastic (189 aa).

A chloroplast-targeting transit peptide spans 1-56 (MAMAAAASLLPASAAPTLPGRAFRPPRNSTPTASLSCDGGSRCRGVGLGVILGGCR). In terms of domain architecture, Thioredoxin spans 72–189 (GSGKYIAPDY…MIRNIIDNEL (118 aa)). Residues cysteine 112 and cysteine 115 each act as nucleophile in the active site. Cysteines 112 and 115 form a disulfide.

The protein belongs to the thioredoxin family. Plant CITRX-type subfamily.

It localises to the plastid. The protein localises to the chloroplast. In terms of biological role, probable thiol-disulfide oxidoreductase that may play a role in proper chloroplast development. This Oryza sativa subsp. japonica (Rice) protein is Thioredoxin-like protein CITRX, chloroplastic.